The chain runs to 113 residues: 2Fe-2S ferredoxin (113 aa).

The region spanning P2–N104 is the 2Fe-2S ferredoxin-type domain. C42, C48, C51, and C87 together coordinate [2Fe-2S] cluster.

The protein belongs to the adrenodoxin/putidaredoxin family. [2Fe-2S] cluster serves as cofactor.

Its function is as follows. Ferredoxin are iron-sulfur proteins that transfer electrons in a wide variety of metabolic reactions. This chain is 2Fe-2S ferredoxin (fdx), found in Haemophilus influenzae (strain ATCC 51907 / DSM 11121 / KW20 / Rd).